Reading from the N-terminus, the 193-residue chain is Holliday junction branch migration complex subunit RuvA (193 aa).

Residues 1-64 (MIGRIAGTLL…EDAHLLYGFL (64 aa)) form a domain I region. The segment at 65–139 (TPQERSTFRE…GKLGADLGPL (75 aa)) is domain II. A flexible linker region spans residues 139–143 (LAGAA). The tract at residues 144-193 (SPSDHAADILNALLALGYSEKEALAAIKNVPAGTGVSEGIKLSLKALSKA) is domain III.

The protein belongs to the RuvA family. Homotetramer. Forms an RuvA(8)-RuvB(12)-Holliday junction (HJ) complex. HJ DNA is sandwiched between 2 RuvA tetramers; dsDNA enters through RuvA and exits via RuvB. An RuvB hexamer assembles on each DNA strand where it exits the tetramer. Each RuvB hexamer is contacted by two RuvA subunits (via domain III) on 2 adjacent RuvB subunits; this complex drives branch migration. In the full resolvosome a probable DNA-RuvA(4)-RuvB(12)-RuvC(2) complex forms which resolves the HJ.

It localises to the cytoplasm. Its function is as follows. The RuvA-RuvB-RuvC complex processes Holliday junction (HJ) DNA during genetic recombination and DNA repair, while the RuvA-RuvB complex plays an important role in the rescue of blocked DNA replication forks via replication fork reversal (RFR). RuvA specifically binds to HJ cruciform DNA, conferring on it an open structure. The RuvB hexamer acts as an ATP-dependent pump, pulling dsDNA into and through the RuvAB complex. HJ branch migration allows RuvC to scan DNA until it finds its consensus sequence, where it cleaves and resolves the cruciform DNA. In Burkholderia thailandensis (strain ATCC 700388 / DSM 13276 / CCUG 48851 / CIP 106301 / E264), this protein is Holliday junction branch migration complex subunit RuvA.